Reading from the N-terminus, the 307-residue chain is MTDVLPVVAVTYSPGPHLERFLASLSLATERPVSVLLADNGSTDGTPQAAVQRYPNVRLLPTGANLGYGTAVNRTIAQLGEMAGDAGEPWVDDWVIVANPDVQWGPGSIDALLDAASRWPRAGALGPLIRDPDGSVYPSARQMPSLIRGGMHAVLGPFWPRNPWTTAYRQERLEPSERPVGWLSGSCLLVRRSAFGQVGGFDERYFMYMEDVDLGDRLGKAGWLSVYVPSAEVLHHKAHSTGRDPASHLAAHHKSTYIFLADRHSGWWRAPLRWTLRGSLALRSHLMVRSSLRRSRRRKLKLVEGRH.

This sequence belongs to the glycosyltransferase 2 family. The cofactor is Mn(2+). Requires Mg(2+) as cofactor.

It carries out the reaction N-acetyl-alpha-D-glucosaminyl-1-diphospho-trans,octa-cis-decaprenol + dTDP-beta-L-rhamnose = alpha-L-rhamnosyl-(1-&gt;3)-N-acetyl-alpha-D-glucosaminyl-diphospho-trans,octa-cis-decaprenol + dTDP + H(+). Its function is as follows. Involved in the biosynthesis of the mycolylarabinogalactan-peptidoglycan (mAGP) complex, an essential component of the mycobacterial cell wall. Catalyzes the transfer of the rhamnosyl moiety from dTDP-rhamnosyl (dTDP-Rha) onto the decaprenyl-pyrophosphoryl-GlcNAc (C50-PP-GlcNAc), yielding rhamnosyl-decaprenyl-pyrophosphoryl-GlcNAc (Rha-C50-PP-GlcNAc). In Mycobacterium tuberculosis (strain CDC 1551 / Oshkosh), this protein is N-acetylglucosaminyl-diphospho-decaprenol L-rhamnosyltransferase (wbbL).